A 258-amino-acid polypeptide reads, in one-letter code: Phosphonates import ATP-binding protein PhnC 1 (258 aa).

Residues 2–246 (IEFKDVGLVY…TFEEIYGRSI (245 aa)) form the ABC transporter domain. 35 to 42 (GLSGAGKS) is a binding site for ATP.

The protein belongs to the ABC transporter superfamily. Phosphonates importer (TC 3.A.1.9.1) family. As to quaternary structure, the complex is composed of two ATP-binding proteins (PhnC), two transmembrane proteins (PhnE) and a solute-binding protein (PhnD).

The protein localises to the cell membrane. The catalysed reaction is phosphonate(out) + ATP + H2O = phosphonate(in) + ADP + phosphate + H(+). Part of the ABC transporter complex PhnCDE involved in phosphonates import. Responsible for energy coupling to the transport system. The protein is Phosphonates import ATP-binding protein PhnC 1 of Oceanobacillus iheyensis (strain DSM 14371 / CIP 107618 / JCM 11309 / KCTC 3954 / HTE831).